The following is a 423-amino-acid chain: Histidine--tRNA ligase (423 aa).

It belongs to the class-II aminoacyl-tRNA synthetase family. In terms of assembly, homodimer.

Its subcellular location is the cytoplasm. The enzyme catalyses tRNA(His) + L-histidine + ATP = L-histidyl-tRNA(His) + AMP + diphosphate + H(+). This chain is Histidine--tRNA ligase, found in Haemophilus influenzae (strain PittEE).